The following is a 20-amino-acid chain: Small ribosomal subunit protein bS20 (20 aa).

This sequence belongs to the bacterial ribosomal protein bS20 family.

Functionally, binds directly to 16S ribosomal RNA. The chain is Small ribosomal subunit protein bS20 (rpsT) from Brevundimonas diminuta (Pseudomonas diminuta).